Consider the following 348-residue polypeptide: MFQSRFTILIRTLNSSKSRHFSSTIEPTKPQFPQTLAGLRARLAAESPSLSEFSDLQSNNSYSVEVGTKKKPLPKPKWMREAIPGGDKYVQIKKKLRELKLHTVCEEAKCPNLGECWSGGETGTATATIMILGDTCTRGCRFCNVKTSRTPPPPDPDEPANVAEAIASWGLDYVVITSVDRDDLPDQGSNHFAQTVQKLKALKPHMLIEALVPDFRGDPGCVENVAKSGLDVFAHNIETVEDLQSVIRDHRANFKQSLDVLMMAKDHAPKGTLTKTSIMLGCGETPEQVVKTMEKVRAAGVDVMTFGQYMRPSKRHMPVSEYVTPEAFEQYRTXXLVSYVLFSLLISV.

Cysteine 105, cysteine 110, cysteine 116, cysteine 136, cysteine 140, and cysteine 143 together coordinate [4Fe-4S] cluster. Positions 121-341 constitute a Radical SAM core domain; that stretch reads ETGTATATIM…RTXXLVSYVL (221 aa).

It belongs to the radical SAM superfamily. Lipoyl synthase family. Requires [4Fe-4S] cluster as cofactor.

The protein localises to the mitochondrion. It carries out the reaction [[Fe-S] cluster scaffold protein carrying a second [4Fe-4S](2+) cluster] + N(6)-octanoyl-L-lysyl-[protein] + 2 oxidized [2Fe-2S]-[ferredoxin] + 2 S-adenosyl-L-methionine + 4 H(+) = [[Fe-S] cluster scaffold protein] + N(6)-[(R)-dihydrolipoyl]-L-lysyl-[protein] + 4 Fe(3+) + 2 hydrogen sulfide + 2 5'-deoxyadenosine + 2 L-methionine + 2 reduced [2Fe-2S]-[ferredoxin]. It functions in the pathway protein modification; protein lipoylation via endogenous pathway; protein N(6)-(lipoyl)lysine from octanoyl-[acyl-carrier-protein]: step 2/2. Its function is as follows. Catalyzes the radical-mediated insertion of two sulfur atoms into the C-6 and C-8 positions of the octanoyl moiety bound to the lipoyl domains of lipoate-dependent enzymes, thereby converting the octanoylated domains into lipoylated derivatives. This is Lipoyl synthase, mitochondrial (LIP1) from Ricinus communis (Castor bean).